The sequence spans 500 residues: Maturase K (500 aa).

It belongs to the intron maturase 2 family. MatK subfamily.

Its subcellular location is the plastid. The protein localises to the chloroplast. Usually encoded in the trnK tRNA gene intron. Probably assists in splicing its own and other chloroplast group II introns. The polypeptide is Maturase K (Prunus laurocerasus (Cherry laurel)).